Here is a 163-residue protein sequence, read N- to C-terminus: Ribonuclease H (163 aa).

In terms of domain architecture, RNase H type-1 spans 1–142; that stretch reads MRKQVAIFTD…CDELARTAAC (142 aa). Mg(2+)-binding residues include aspartate 10, glutamate 48, aspartate 70, and aspartate 134.

This sequence belongs to the RNase H family. In terms of assembly, monomer. The cofactor is Mg(2+).

It is found in the cytoplasm. The enzyme catalyses Endonucleolytic cleavage to 5'-phosphomonoester.. Endonuclease that specifically degrades the RNA of RNA-DNA hybrids. This is Ribonuclease H from Sodalis glossinidius (strain morsitans).